A 157-amino-acid chain; its full sequence is SsrA-binding protein (157 aa).

The tract at residues 133–157 (LHDKRESEKKRDWGREKGRLLRARG) is disordered. The span at 135–151 (DKRESEKKRDWGREKGR) shows a compositional bias: basic and acidic residues.

It belongs to the SmpB family.

It is found in the cytoplasm. Functionally, required for rescue of stalled ribosomes mediated by trans-translation. Binds to transfer-messenger RNA (tmRNA), required for stable association of tmRNA with ribosomes. tmRNA and SmpB together mimic tRNA shape, replacing the anticodon stem-loop with SmpB. tmRNA is encoded by the ssrA gene; the 2 termini fold to resemble tRNA(Ala) and it encodes a 'tag peptide', a short internal open reading frame. During trans-translation Ala-aminoacylated tmRNA acts like a tRNA, entering the A-site of stalled ribosomes, displacing the stalled mRNA. The ribosome then switches to translate the ORF on the tmRNA; the nascent peptide is terminated with the 'tag peptide' encoded by the tmRNA and targeted for degradation. The ribosome is freed to recommence translation, which seems to be the essential function of trans-translation. The chain is SsrA-binding protein from Bradyrhizobium sp. (strain BTAi1 / ATCC BAA-1182).